A 306-amino-acid chain; its full sequence is Glutaminase (306 aa).

Positions 64, 115, 159, 166, 190, 242, and 260 each coordinate substrate.

Belongs to the glutaminase family. Homotetramer.

It carries out the reaction L-glutamine + H2O = L-glutamate + NH4(+). The polypeptide is Glutaminase (Aeromonas salmonicida (strain A449)).